Here is a 397-residue protein sequence, read N- to C-terminus: 3-ketoacyl-CoA thiolase, mitochondrial (397 aa).

The N-terminal 16 residues, 1 to 16, are a transit peptide targeting the mitochondrion; not cleaved; sequence MALLRGVFIVAAKRTP. Lys25 is modified (N6-acetyllysine; alternate). Lys25 carries the N6-succinyllysine; alternate modification. The residue at position 28 (Ser28) is a Phosphoserine. Residue Lys45 is modified to N6-succinyllysine. Cys92 serves as the catalytic Acyl-thioester intermediate. Thr119 is subject to Phosphothreonine. Ser121 carries the phosphoserine modification. Tyr127 carries the post-translational modification Phosphotyrosine. Thr136 is subject to Phosphothreonine. 6 positions are modified to N6-acetyllysine; alternate: Lys137, Lys143, Lys158, Lys171, Lys191, and Lys209. Residues Lys137, Lys143, Lys158, Lys171, Lys191, and Lys209 each carry the N6-succinyllysine; alternate modification. An N6-succinyllysine mark is found at Lys211, Lys212, and Lys214. CoA is bound by residues Arg224 and Thr227. Residue Lys234 is modified to N6-acetyllysine; alternate. Lys234 is subject to N6-succinyllysine; alternate. Position 240 is an N6-succinyllysine (Lys240). Position 241 is an N6-acetyllysine (Lys241). Ser251 is a CoA binding site. Lys269 and Lys270 each carry N6-acetyllysine. The residue at position 305 (Lys305) is an N6-acetyllysine; alternate. An N6-succinyllysine; alternate modification is found at Lys305. Ser310 is modified (phosphoserine). Lys312 bears the N6-acetyllysine; alternate mark. The residue at position 312 (Lys312) is an N6-succinyllysine; alternate. N6-acetyllysine is present on Lys340. Position 344 is a phosphoserine (Ser344). Lys375 is modified (N6-acetyllysine). Cys382 serves as the catalytic Proton donor/acceptor.

This sequence belongs to the thiolase-like superfamily. Thiolase family. As to quaternary structure, homotetramer. Interacts with BNIP3.

Its subcellular location is the mitochondrion. The catalysed reaction is an acyl-CoA + acetyl-CoA = a 3-oxoacyl-CoA + CoA. It catalyses the reaction 2 acetyl-CoA = acetoacetyl-CoA + CoA. The enzyme catalyses acetyl-CoA + H2O = acetate + CoA + H(+). It carries out the reaction propanoyl-CoA + H2O = propanoate + CoA + H(+). The catalysed reaction is butanoyl-CoA + H2O = butanoate + CoA + H(+). It catalyses the reaction hexanoyl-CoA + H2O = hexanoate + CoA + H(+). The enzyme catalyses octanoyl-CoA + H2O = octanoate + CoA + H(+). It carries out the reaction decanoyl-CoA + H2O = decanoate + CoA + H(+). The catalysed reaction is dodecanoyl-CoA + H2O = dodecanoate + CoA + H(+). It catalyses the reaction tetradecanoyl-CoA + H2O = tetradecanoate + CoA + H(+). The enzyme catalyses hexadecanoyl-CoA + H2O = hexadecanoate + CoA + H(+). It participates in lipid metabolism; fatty acid beta-oxidation. In the production of energy from fats, this is one of the enzymes that catalyzes the last step of the mitochondrial beta-oxidation pathway, an aerobic process breaking down fatty acids into acetyl-CoA. Using free coenzyme A/CoA, catalyzes the thiolytic cleavage of medium- to long-chain unbranched 3-oxoacyl-CoAs into acetyl-CoA and a fatty acyl-CoA shortened by two carbon atoms. Also catalyzes the condensation of two acetyl-CoA molecules into acetoacetyl-CoA and could be involved in the production of ketone bodies. Also displays hydrolase activity on various fatty acyl-CoAs. Thereby, could be responsible for the production of acetate in a side reaction to beta-oxidation. Abolishes BNIP3-mediated apoptosis and mitochondrial damage. This Mus musculus (Mouse) protein is 3-ketoacyl-CoA thiolase, mitochondrial (Acaa2).